Consider the following 166-residue polypeptide: Lipoprotein signal peptidase (166 aa).

3 helical membrane-spanning segments follow: residues 12–32 (WLWL…LILQ), 70–90 (WFFA…MYRS), and 102–122 (ALII…GFVV). Active-site residues include aspartate 123 and aspartate 141. A helical membrane pass occupies residues 137–157 (FNLADTAICIGAALIVLEGFL).

This sequence belongs to the peptidase A8 family.

Its subcellular location is the cell inner membrane. The catalysed reaction is Release of signal peptides from bacterial membrane prolipoproteins. Hydrolyzes -Xaa-Yaa-Zaa-|-(S,diacylglyceryl)Cys-, in which Xaa is hydrophobic (preferably Leu), and Yaa (Ala or Ser) and Zaa (Gly or Ala) have small, neutral side chains.. It participates in protein modification; lipoprotein biosynthesis (signal peptide cleavage). In terms of biological role, this protein specifically catalyzes the removal of signal peptides from prolipoproteins. The sequence is that of Lipoprotein signal peptidase from Salmonella paratyphi A (strain ATCC 9150 / SARB42).